We begin with the raw amino-acid sequence, 597 residues long: Cytosolic Fe-S cluster assembly factor nar1 (597 aa).

Cys20 contributes to the [4Fe-4S] cluster binding site. A disordered region spans residues Glu25 to Val46. 5 residues coordinate [4Fe-4S] cluster: Cys61, Cys64, Cys67, Cys208, and Cys263. Residues Arg424–Pro449 are disordered. Over residues Ala432–Ser444 the composition is skewed to polar residues. [4Fe-4S] cluster is bound by residues Cys464 and Cys468.

The protein belongs to the NARF family.

In terms of biological role, component of the cytosolic Fe/S protein assembly machinery. Required for maturation of extramitochondrial Fe/S proteins. May play a role in the transfer of pre-assembled Fe/S clusters to target apoproteins. The sequence is that of Cytosolic Fe-S cluster assembly factor nar1 (nar1) from Aspergillus fumigatus (strain ATCC MYA-4609 / CBS 101355 / FGSC A1100 / Af293) (Neosartorya fumigata).